The chain runs to 138 residues: Cysteine desulfuration protein SufE (138 aa).

Cysteine 51 acts as the Cysteine persulfide intermediate in catalysis.

The protein belongs to the SufE family. Homodimer. Interacts with SufS.

It localises to the cytoplasm. The protein operates within cofactor biosynthesis; iron-sulfur cluster biosynthesis. Its function is as follows. Participates in cysteine desulfuration mediated by SufS. Cysteine desulfuration mobilizes sulfur from L-cysteine to yield L-alanine and constitutes an essential step in sulfur metabolism for biosynthesis of a variety of sulfur-containing biomolecules. Functions as a sulfur acceptor for SufS, by mediating the direct transfer of the sulfur atom from the S-sulfanylcysteine of SufS, an intermediate product of cysteine desulfuration process. This is Cysteine desulfuration protein SufE from Salmonella arizonae (strain ATCC BAA-731 / CDC346-86 / RSK2980).